Reading from the N-terminus, the 335-residue chain is Phosphate acyltransferase (335 aa).

The protein belongs to the PlsX family. As to quaternary structure, homodimer. Probably interacts with PlsY.

Its subcellular location is the cytoplasm. The catalysed reaction is a fatty acyl-[ACP] + phosphate = an acyl phosphate + holo-[ACP]. It functions in the pathway lipid metabolism; phospholipid metabolism. Catalyzes the reversible formation of acyl-phosphate (acyl-PO(4)) from acyl-[acyl-carrier-protein] (acyl-ACP). This enzyme utilizes acyl-ACP as fatty acyl donor, but not acyl-CoA. The chain is Phosphate acyltransferase from Streptococcus pyogenes serotype M1.